Consider the following 277-residue polypeptide: Diaminopimelate epimerase (277 aa).

Asn-13, Gln-46, and Asn-66 together coordinate substrate. Residue Cys-75 is the Proton donor of the active site. Residues 76–77, Asn-159, Asn-192, and 210–211 each bind substrate; these read GN and ER. Cys-219 acts as the Proton acceptor in catalysis. Residue 220–221 coordinates substrate; it reads GT.

It belongs to the diaminopimelate epimerase family. In terms of assembly, homodimer.

It is found in the cytoplasm. The enzyme catalyses (2S,6S)-2,6-diaminopimelate = meso-2,6-diaminopimelate. It participates in amino-acid biosynthesis; L-lysine biosynthesis via DAP pathway; DL-2,6-diaminopimelate from LL-2,6-diaminopimelate: step 1/1. Functionally, catalyzes the stereoinversion of LL-2,6-diaminopimelate (L,L-DAP) to meso-diaminopimelate (meso-DAP), a precursor of L-lysine and an essential component of the bacterial peptidoglycan. In Azoarcus sp. (strain BH72), this protein is Diaminopimelate epimerase.